The following is a 952-amino-acid chain: Chaperone protein ClpC2, chloroplastic (952 aa).

A chloroplast-targeting transit peptide spans Met1 to Gln45. One can recognise a Clp R domain in the interval Phe115 to Glu257. Repeat regions lie at residues Phe118 to Gly183 and Phe193 to Glu257. The segment at Leu278 to Pro525 is i. ATP is bound at residue Gly323–Thr330. Residues Glu532 to Glu567 enclose the UVR domain. An II region spans residues Val592–Ser783. ATP is bound at residue Gly666–Ser673.

It belongs to the ClpA/ClpB family. ClpC subfamily. In terms of assembly, homodimer and homohexamer. Hexamerization upon addition of ATP. Interacts with CLPT1. Interacts with CLPS1. Stably associated with the import machinery. Interacts with CLPF. Mg(2+) serves as cofactor. Expressed at low levels in roots and inflorescences. Expressed at very low levels in rosette leaves. Expressed in photosynthetic green tissues with high levels in young, developing leaf tissues.

It is found in the plastid. Its subcellular location is the chloroplast stroma. The protein localises to the chloroplast membrane. The catalysed reaction is ATP + H2O = ADP + phosphate + H(+). In terms of biological role, molecular chaperone. May act as a suppressor of FtsH-mediated thylakoid membrane biogenesis and may enhance photoinhibition. Seems not involved in chloroplastic protein import. Probable component of the TIC-associated stromal import motor involved in inner membrane translocation. Has an ATPase activity, but no ADPase activity. Interacts with transit peptides with a positional preference. Localization of the signal sequence at the N-terminal end of a protein seems mandatory for interaction to take place. This chain is Chaperone protein ClpC2, chloroplastic, found in Arabidopsis thaliana (Mouse-ear cress).